Reading from the N-terminus, the 499-residue chain is L-arabinose isomerase (499 aa).

Glu306, Glu333, His350, and His449 together coordinate Mn(2+).

It belongs to the arabinose isomerase family. It depends on Mn(2+) as a cofactor.

The catalysed reaction is beta-L-arabinopyranose = L-ribulose. It functions in the pathway carbohydrate degradation; L-arabinose degradation via L-ribulose; D-xylulose 5-phosphate from L-arabinose (bacterial route): step 1/3. In terms of biological role, catalyzes the conversion of L-arabinose to L-ribulose. In Aeromonas hydrophila subsp. hydrophila (strain ATCC 7966 / DSM 30187 / BCRC 13018 / CCUG 14551 / JCM 1027 / KCTC 2358 / NCIMB 9240 / NCTC 8049), this protein is L-arabinose isomerase.